A 234-amino-acid chain; its full sequence is Triosephosphate isomerase (234 aa).

8 to 10 (NFK) provides a ligand contact to substrate. Catalysis depends on His-90, which acts as the Electrophile. Residue Glu-159 is the Proton acceptor of the active site. Substrate contacts are provided by Gly-165 and Ser-197.

This sequence belongs to the triosephosphate isomerase family. Homodimer.

The protein resides in the cytoplasm. The catalysed reaction is D-glyceraldehyde 3-phosphate = dihydroxyacetone phosphate. The protein operates within carbohydrate biosynthesis; gluconeogenesis. Its pathway is carbohydrate degradation; glycolysis; D-glyceraldehyde 3-phosphate from glycerone phosphate: step 1/1. Its function is as follows. Involved in the gluconeogenesis. Catalyzes stereospecifically the conversion of dihydroxyacetone phosphate (DHAP) to D-glyceraldehyde-3-phosphate (G3P). The sequence is that of Triosephosphate isomerase from Helicobacter pylori (strain J99 / ATCC 700824) (Campylobacter pylori J99).